We begin with the raw amino-acid sequence, 334 residues long: MYNTDIVIIGSGPVGLFAVFQAGMLGMKCHVIDAQEVIGGQCITLYPEKHIYDIPAYPKIAAKELIKQLESQAAPFNPVYHLNQQATELNKHDDFFEIKTSKNTLIKSKVIIIAAGAGAFGPNKPPIANIEAFEGKSIFYFINDKSKFLGKNIVVAGGGDSAVDWAITLSEIANKIYLVHRRDKFTAATESVRQLRHIAETGKIELVTGYQLNNLDGHNSELRSVIVKDLQNNIRKLDANILLPFFGLKQDLGPLANWGFNVRLQHIEVDNYYYQTNIKGIYAIGDVAHYVGKLKLIITGFAEAACSLHHAYSRVFDGKALHFEYSTNKYEQKQ.

The FAD site is built by D33, Q41, Y46, A86, F120, D286, and T327.

Belongs to the ferredoxin--NADP reductase type 2 family. In terms of assembly, homodimer. It depends on FAD as a cofactor.

It carries out the reaction 2 reduced [2Fe-2S]-[ferredoxin] + NADP(+) + H(+) = 2 oxidized [2Fe-2S]-[ferredoxin] + NADPH. This is Ferredoxin--NADP reductase from Rickettsia prowazekii (strain Madrid E).